We begin with the raw amino-acid sequence, 211 residues long: Probable calcium-binding protein CML11 (211 aa).

Disordered stretches follow at residues 1-22 (MSEP…AAAT) and 40-60 (SCSA…LGDD). A compositionally biased stretch (low complexity) spans 44 to 53 (QQQQQQQQQQ). EF-hand domains lie at 60-95 (DQLG…LGLK), 96-131 (PSTD…ELLY), 136-171 (YSED…LGHA), and 172-207 (LTVK…AAFD). Aspartate 73, asparagine 75, aspartate 77, serine 79, glutamate 84, aspartate 109, asparagine 111, asparagine 113, glutamate 120, aspartate 149, aspartate 151, asparagine 153, glutamate 160, aspartate 185, aspartate 187, aspartate 189, arginine 191, and glutamate 196 together coordinate Ca(2+).

Potential calcium sensor. The protein is Probable calcium-binding protein CML11 (CML11) of Oryza sativa subsp. japonica (Rice).